The following is a 304-amino-acid chain: Glutaminase (304 aa).

Residues S63, N114, E158, N165, Y189, Y240, and V258 each contribute to the substrate site.

It belongs to the glutaminase family. As to quaternary structure, homotetramer.

It catalyses the reaction L-glutamine + H2O = L-glutamate + NH4(+). In Shewanella putrefaciens (strain CN-32 / ATCC BAA-453), this protein is Glutaminase.